The following is a 398-amino-acid chain: Acetate kinase (398 aa).

Asn7 contacts Mg(2+). Lys14 provides a ligand contact to ATP. Arg91 contributes to the substrate binding site. The active-site Proton donor/acceptor is the Asp148. ATP contacts are provided by residues 208–212, 283–285, and 331–335; these read HLGNG, DFR, and GIGEH. Position 386 (Glu386) interacts with Mg(2+).

The protein belongs to the acetokinase family. Homodimer. Mg(2+) serves as cofactor. The cofactor is Mn(2+).

The protein localises to the cytoplasm. It catalyses the reaction acetate + ATP = acetyl phosphate + ADP. Its pathway is metabolic intermediate biosynthesis; acetyl-CoA biosynthesis; acetyl-CoA from acetate: step 1/2. Catalyzes the formation of acetyl phosphate from acetate and ATP. Can also catalyze the reverse reaction. This chain is Acetate kinase, found in Clostridium botulinum (strain Eklund 17B / Type B).